A 478-amino-acid polypeptide reads, in one-letter code: Sporozoite surface protein P36p (478 aa).

Residues 1–41 (MYVLVLIHMCYHFTMKRKKLFVYFIFLSFIINFNFNININF) form the signal peptide. 2 6-Cys domains span residues 42–178 (VCSN…IKKT) and 181–326 (KIKG…FDNN). 6 cysteine pairs are disulfide-bonded: cysteine 59/cysteine 71, cysteine 85/cysteine 159, cysteine 102/cysteine 157, cysteine 185/cysteine 209, cysteine 223/cysteine 302, and cysteine 243/cysteine 300. Residues asparagine 109 and asparagine 138 are each glycosylated (N-linked (GlcNAc...) asparagine). N-linked (GlcNAc...) asparagine glycosylation is found at asparagine 229, asparagine 279, and asparagine 291. Residue serine 455 is the site of GPI-anchor amidated serine attachment. Residues 456–478 (SSKYILFNNFLILFIFLIYIYST) constitute a propeptide, removed in mature form.

Its subcellular location is the cell surface. The protein resides in the cell membrane. In terms of biological role, involved in sporozoite infection of hepatocytes and replication therein. The polypeptide is Sporozoite surface protein P36p (PF52) (Plasmodium falciparum (isolate 3D7)).